A 138-amino-acid polypeptide reads, in one-letter code: Cysteine desulfuration protein SufE (138 aa).

Residue Cys-51 is the Cysteine persulfide intermediate of the active site.

Belongs to the SufE family. In terms of assembly, homodimer. Interacts with SufS.

It localises to the cytoplasm. The protein operates within cofactor biosynthesis; iron-sulfur cluster biosynthesis. In terms of biological role, participates in cysteine desulfuration mediated by SufS. Cysteine desulfuration mobilizes sulfur from L-cysteine to yield L-alanine and constitutes an essential step in sulfur metabolism for biosynthesis of a variety of sulfur-containing biomolecules. Functions as a sulfur acceptor for SufS, by mediating the direct transfer of the sulfur atom from the S-sulfanylcysteine of SufS, an intermediate product of cysteine desulfuration process. The polypeptide is Cysteine desulfuration protein SufE (Salmonella choleraesuis (strain SC-B67)).